A 166-amino-acid chain; its full sequence is Transcription antitermination protein NusB (166 aa).

Positions 1–18 (MISDESDRFNPRDPKPAD) are enriched in basic and acidic residues. A disordered region spans residues 1 to 30 (MISDESDRFNPRDPKPADAGKPSKSAKRRE).

The protein belongs to the NusB family.

Involved in transcription antitermination. Required for transcription of ribosomal RNA (rRNA) genes. Binds specifically to the boxA antiterminator sequence of the ribosomal RNA (rrn) operons. This is Transcription antitermination protein NusB from Pseudomonas fluorescens (strain Pf0-1).